The sequence spans 200 residues: GTP-dependent dephospho-CoA kinase (200 aa).

Positions 56, 57, 58, 75, and 132 each coordinate GTP.

It belongs to the GTP-dependent DPCK family.

It catalyses the reaction 3'-dephospho-CoA + GTP = GDP + CoA + H(+). Its pathway is cofactor biosynthesis; coenzyme A biosynthesis. Catalyzes the GTP-dependent phosphorylation of the 3'-hydroxyl group of dephosphocoenzyme A to form coenzyme A (CoA). This chain is GTP-dependent dephospho-CoA kinase, found in Caldivirga maquilingensis (strain ATCC 700844 / DSM 13496 / JCM 10307 / IC-167).